Here is a 208-residue protein sequence, read N- to C-terminus: ER membrane protein complex subunit 8/9 homolog (208 aa).

The 136-residue stretch at 11-146 (YEISQNAYIK…ERSPVMQLCV (136 aa)) folds into the MPN domain.

The protein belongs to the EMC8/EMC9 family.

The protein is ER membrane protein complex subunit 8/9 homolog (EMB2731) of Arabidopsis thaliana (Mouse-ear cress).